Reading from the N-terminus, the 193-residue chain is Peptidyl-tRNA hydrolase 1 (193 aa).

Position 27 (Y27) interacts with tRNA. The active-site Proton acceptor is H32. TRNA contacts are provided by F80, N82, and N128.

The protein belongs to the PTH family. As to quaternary structure, monomer.

It localises to the cytoplasm. It catalyses the reaction an N-acyl-L-alpha-aminoacyl-tRNA + H2O = an N-acyl-L-amino acid + a tRNA + H(+). In terms of biological role, hydrolyzes ribosome-free peptidyl-tRNAs (with 1 or more amino acids incorporated), which drop off the ribosome during protein synthesis, or as a result of ribosome stalling. Its function is as follows. Catalyzes the release of premature peptidyl moieties from peptidyl-tRNA molecules trapped in stalled 50S ribosomal subunits, and thus maintains levels of free tRNAs and 50S ribosomes. The protein is Peptidyl-tRNA hydrolase 1 of Corynebacterium jeikeium (strain K411).